The following is a 113-amino-acid chain: MRHYEITLIVHPDQSAQVGTMMEKYKEIITTGGGKIHRKEDWGRKHLAYPIKKIYKAHYLMMNIECDQEVLDKLNYNFRFNDAILRNLIISEDGVITTPSIMMANKDKEKGRS.

It belongs to the bacterial ribosomal protein bS6 family.

Its function is as follows. Binds together with bS18 to 16S ribosomal RNA. The sequence is that of Small ribosomal subunit protein bS6 from Ruthia magnifica subsp. Calyptogena magnifica.